The following is a 134-amino-acid chain: Putative nickel-responsive regulator (134 aa).

The Ni(2+) site is built by H78, H89, H91, and C97.

Belongs to the transcriptional regulatory CopG/NikR family. Ni(2+) serves as cofactor.

Functionally, transcriptional regulator. The protein is Putative nickel-responsive regulator of Chlorobium phaeobacteroides (strain DSM 266 / SMG 266 / 2430).